The primary structure comprises 559 residues: DNA ligase (559 aa).

Glu-247 lines the ATP pocket. Residue Lys-249 is the N6-AMP-lysine intermediate of the active site. 6 residues coordinate ATP: Arg-254, Arg-269, Glu-299, Phe-339, Arg-414, and Lys-420.

Belongs to the ATP-dependent DNA ligase family. It depends on Mg(2+) as a cofactor.

It catalyses the reaction ATP + (deoxyribonucleotide)n-3'-hydroxyl + 5'-phospho-(deoxyribonucleotide)m = (deoxyribonucleotide)n+m + AMP + diphosphate.. The enzyme catalyses NAD(+) + (deoxyribonucleotide)n-3'-hydroxyl + 5'-phospho-(deoxyribonucleotide)m = (deoxyribonucleotide)n+m + AMP + beta-nicotinamide D-nucleotide.. In terms of biological role, DNA ligase that seals nicks in double-stranded DNA during DNA replication, DNA recombination and DNA repair. Shows high activity with either ATP or NAD(+). The polypeptide is DNA ligase (Thermococcus fumicolans).